We begin with the raw amino-acid sequence, 359 residues long: Protein-glutamate methylesterase/protein-glutamine glutaminase 1 (359 aa).

Positions 4–121 (SVLIVDDSAV…RAFLLEAAKE (118 aa)) constitute a Response regulatory domain. 4-aspartylphosphate is present on Asp-55. The CheB-type methylesterase domain occupies 169-354 (YRTTEKIIAI…MSLERIAHML (186 aa)). Residues Ser-181, His-207, and Asp-303 contribute to the active site.

It belongs to the CheB family. Phosphorylated by CheA. Phosphorylation of the N-terminal regulatory domain activates the methylesterase activity.

It localises to the cytoplasm. It carries out the reaction [protein]-L-glutamate 5-O-methyl ester + H2O = L-glutamyl-[protein] + methanol + H(+). The catalysed reaction is L-glutaminyl-[protein] + H2O = L-glutamyl-[protein] + NH4(+). Involved in chemotaxis. Part of a chemotaxis signal transduction system that modulates chemotaxis in response to various stimuli. Catalyzes the demethylation of specific methylglutamate residues introduced into the chemoreceptors (methyl-accepting chemotaxis proteins or MCP) by CheR. Also mediates the irreversible deamidation of specific glutamine residues to glutamic acid. The polypeptide is Protein-glutamate methylesterase/protein-glutamine glutaminase 1 (Chromobacterium violaceum (strain ATCC 12472 / DSM 30191 / JCM 1249 / CCUG 213 / NBRC 12614 / NCIMB 9131 / NCTC 9757 / MK)).